Consider the following 468-residue polypeptide: Asparagine--tRNA ligase (468 aa).

It belongs to the class-II aminoacyl-tRNA synthetase family. In terms of assembly, homodimer.

It is found in the cytoplasm. It catalyses the reaction tRNA(Asn) + L-asparagine + ATP = L-asparaginyl-tRNA(Asn) + AMP + diphosphate + H(+). The polypeptide is Asparagine--tRNA ligase (Parabacteroides distasonis (strain ATCC 8503 / DSM 20701 / CIP 104284 / JCM 5825 / NCTC 11152)).